The sequence spans 228 residues: Ion-translocating oxidoreductase complex subunit E (228 aa).

The next 5 helical transmembrane spans lie at Ala18–Ala38, Ile69–Ala89, Phe92–Val112, Leu125–Leu145, and Pro182–Val202.

It belongs to the NqrDE/RnfAE family. As to quaternary structure, the complex is composed of six subunits: RnfA, RnfB, RnfC, RnfD, RnfE and RnfG.

Its subcellular location is the cell inner membrane. Functionally, part of a membrane-bound complex that couples electron transfer with translocation of ions across the membrane. In Cronobacter sakazakii (strain ATCC BAA-894) (Enterobacter sakazakii), this protein is Ion-translocating oxidoreductase complex subunit E.